The following is a 246-amino-acid chain: Nuclear transcription factor Y subunit C-2 (246 aa).

Disordered stretches follow at residues 1 to 35 (MDNQQLPYAGQPAAAGAGAPVPGVPGAGGPPAVPH) and 205 to 246 (QQGA…PSSE). The span at 9–21 (AGQPAAAGAGAPV) shows a compositional bias: low complexity.

This sequence belongs to the NFYC/HAP5 subunit family. Heterotrimeric transcription factor composed of three components, NF-YA, NF-YB and NF-YC. NF-YB and NF-YC must interact and dimerize for NF-YA association and DNA binding. Interacts with NFYB8, NFYB10 and HD5/NFYB11.

Its subcellular location is the nucleus. The protein resides in the cytoplasm. Its function is as follows. Probable transcription factor involved in the regulation of flowering time under long day (LD) conditions. Functions as a repressor of flowering, independently of HD1 and GHD7. Controls flowering time by negatively regulating the expression of EHD1 and HD3A. Component of the NF-Y/HAP transcription factor complex. The polypeptide is Nuclear transcription factor Y subunit C-2 (Oryza sativa subsp. japonica (Rice)).